Reading from the N-terminus, the 313-residue chain is Guanine nucleotide-binding protein-like 3-like protein (313 aa).

Residues 1 to 14 (MGIKKKRQSKRLTT) show a composition bias toward basic residues. Positions 1–41 (MGIKKKRQSKRLTTRKREGMLKRARANERKKRRMDRKMQAK) are disordered. Residues 15-27 (RKREGMLKRARAN) show a composition bias toward basic and acidic residues. GTP-binding positions include 95-98 (SKSD), 178-185 (GNPGSGKN), and 212-215 (TLSS).

It belongs to the MMR1/HSR1 GTP-binding protein family.

The protein resides in the nucleus. It is found in the nucleolus. Its function is as follows. Required for normal processing of ribosomal pre-rRNA. Required for cell proliferation. Binds GTP. This Encephalitozoon cuniculi (strain GB-M1) (Microsporidian parasite) protein is Guanine nucleotide-binding protein-like 3-like protein.